A 149-amino-acid polypeptide reads, in one-letter code: Large ribosomal subunit protein bL9 (149 aa).

Belongs to the bacterial ribosomal protein bL9 family.

Binds to the 23S rRNA. The protein is Large ribosomal subunit protein bL9 of Xanthomonas campestris pv. campestris (strain 8004).